Here is a 194-residue protein sequence, read N- to C-terminus: MREATVERATAETWVRLRLGLDGPTGGKVDTGLPFLDHMLLQLQRHGRFLLEVEARGDLEVDVHHLVEDVGIALGMALKEALGDGVGLERYAEAFAPMDETLVLCVLDLSGRPHLEFRPEAWPVVGEAGGVNHYHLREFLRGLVNHGRLTLHLRLLSGREAHHVVEASFKALARALHKATRRTGEGVPSTKGVL.

Belongs to the imidazoleglycerol-phosphate dehydratase family.

The protein resides in the cytoplasm. The enzyme catalyses D-erythro-1-(imidazol-4-yl)glycerol 3-phosphate = 3-(imidazol-4-yl)-2-oxopropyl phosphate + H2O. The protein operates within amino-acid biosynthesis; L-histidine biosynthesis; L-histidine from 5-phospho-alpha-D-ribose 1-diphosphate: step 6/9. The polypeptide is Imidazoleglycerol-phosphate dehydratase (Thermus thermophilus (strain ATCC BAA-163 / DSM 7039 / HB27)).